Here is a 397-residue protein sequence, read N- to C-terminus: S-adenosylmethionine synthase (397 aa).

His-16 contacts ATP. Position 18 (Asp-18) interacts with Mg(2+). Residue Glu-44 coordinates K(+). Residues Glu-57 and Gln-100 each coordinate L-methionine. Residues Gln-100–Glu-110 form a flexible loop region. ATP-binding positions include Asp-175 to Lys-177, Arg-242 to Phe-243, Asp-251, Arg-257 to Lys-258, Ala-274, and Lys-278. Asp-251 is a binding site for L-methionine. Lys-282 lines the L-methionine pocket.

It belongs to the AdoMet synthase family. As to quaternary structure, homotetramer; dimer of dimers. Requires Mg(2+) as cofactor. The cofactor is K(+).

The protein localises to the cytoplasm. It carries out the reaction L-methionine + ATP + H2O = S-adenosyl-L-methionine + phosphate + diphosphate. It functions in the pathway amino-acid biosynthesis; S-adenosyl-L-methionine biosynthesis; S-adenosyl-L-methionine from L-methionine: step 1/1. Catalyzes the formation of S-adenosylmethionine (AdoMet) from methionine and ATP. The overall synthetic reaction is composed of two sequential steps, AdoMet formation and the subsequent tripolyphosphate hydrolysis which occurs prior to release of AdoMet from the enzyme. The sequence is that of S-adenosylmethionine synthase from Streptococcus thermophilus (strain CNRZ 1066).